The following is a 126-amino-acid chain: Thiocyanate hydrolase subunit alpha (126 aa).

In terms of assembly, heterododecamer consisting of 4 alpha, 4 beta, and 4 gamma subunits.

It carries out the reaction thiocyanate + H2O + 2 H(+) = carbonyl sulfide + NH4(+). Its pathway is organosulfur degradation; thiocyanate degradation. In terms of biological role, involved in the degradation of thiocyanate. The protein is Thiocyanate hydrolase subunit alpha (scnA) of Thiobacillus thioparus.